Consider the following 963-residue polypeptide: Respiratory burst oxidase homolog protein A (963 aa).

Over residues 1 to 12 the composition is skewed to basic and acidic residues; sequence MRGLPGHERRWT. Positions 1–36 are disordered; it reads MRGLPGHERRWTSDTVSSGKDLSGESSPGTDSGNIS. At 1 to 399 the chain is on the cytoplasmic side; sequence MRGLPGHERR…VYSLQENWKR (399 aa). Positions 13 to 36 are enriched in polar residues; it reads SDTVSSGKDLSGESSPGTDSGNIS. EF-hand-like stretches follow at residues 219 to 227 and 253 to 264; these read AKDGYLYRS and RRLKVDKISKEE. An EF-hand domain is found at 276–311; that stretch reads SFDSRLQIFFDMVDKNEDGRIGEEEVKEIIMLSASA. Residues Asp289, Asn291, Asp293, Arg295, and Glu300 each contribute to the Ca(2+) site. A helical transmembrane segment spans residues 400-420; it reads IWVLVLWILIMIGLFLWKFYL. Over 421-435 the chain is Extracellular; sequence YKQKSAFQVMGYCLL. The helical transmembrane segment at 436 to 456 threads the bilayer; that stretch reads TAKGAAETLKFNMALILLPVC. The Ferric oxidoreductase domain occupies 438–595; that stretch reads KGAAETLKFN…LLIIVYIVLI (158 aa). Residues 457–482 lie on the Cytoplasmic side of the membrane; it reads RNTITFLRSTKLSCFVPFDDNINFHK. A helical transmembrane segment spans residues 483–503; the sequence is TVAAAIVTGIILHAGNHLVCD. At 504 to 535 the chain is on the extracellular side; that stretch reads FPKLIHANNTNYQKYLVNDFGPSQPQYIDLVK. The helical transmembrane segment at 536-556 threads the bilayer; it reads GVEGVTGIIMVILMAIAFTLA. At 557-583 the chain is on the cytoplasmic side; sequence TRWFRRSLIKFPKPFDRLTGFNAFWYS. A helical membrane pass occupies residues 584–604; it reads HHLLIIVYIVLIIHGTFLYLV. Residues 605 to 759 lie on the Extracellular side of the membrane; that stretch reads HNWYSKTTWM…APAQDYRKYD (155 aa). One can recognise an FAD-binding FR-type domain in the interval 634–754; that stretch reads SGLYTVRLLK…DGPYGAPAQD (121 aa). A helical transmembrane segment spans residues 760 to 780; the sequence is VLLLVGLGIGATPFISILKDL. Residues 781–963 lie on the Cytoplasmic side of the membrane; it reads LKNIVTMEEQ…TKFEFHKEHF (183 aa).

It belongs to the RBOH (TC 5.B.1.3) family. As to quaternary structure, monomer and homodimer. Phosphorylated by CPK.

The protein resides in the cell membrane. In terms of biological role, calcium-dependent NADPH oxidase that generates superoxide. Involved in the rapid and transient phase I oxidative burst induced by pathogen infection. The polypeptide is Respiratory burst oxidase homolog protein A (RBOHA) (Solanum tuberosum (Potato)).